The primary structure comprises 269 residues: Hydroxyethylthiazole kinase (269 aa).

Met42 serves as a coordination point for substrate. Residues Arg118 and Ser164 each contribute to the ATP site. Substrate is bound at residue Gly191.

This sequence belongs to the Thz kinase family. The cofactor is Mg(2+).

It carries out the reaction 5-(2-hydroxyethyl)-4-methylthiazole + ATP = 4-methyl-5-(2-phosphooxyethyl)-thiazole + ADP + H(+). Its pathway is cofactor biosynthesis; thiamine diphosphate biosynthesis; 4-methyl-5-(2-phosphoethyl)-thiazole from 5-(2-hydroxyethyl)-4-methylthiazole: step 1/1. In terms of biological role, catalyzes the phosphorylation of the hydroxyl group of 4-methyl-5-beta-hydroxyethylthiazole (THZ). The polypeptide is Hydroxyethylthiazole kinase (Listeria monocytogenes serotype 4b (strain F2365)).